Consider the following 321-residue polypeptide: AA9 family lytic polysaccharide monooxygenase A (321 aa).

Residues 1–21 (MFRAQSFLPVLALVLRVAAHG) form the signal peptide. A Cu(2+)-binding site is contributed by H20. An intrachain disulfide couples C71 to C197. An N-linked (GlcNAc...) asparagine glycan is attached at N72. H105 provides a ligand contact to Cu(2+). N157 carries N-linked (GlcNAc...) asparagine glycosylation. Residues H183 and Q192 each contribute to the O2 site. Y194 provides a ligand contact to Cu(2+). The tract at residues 278–306 (SSSAAATQSSSAAPSSSAIGTSTASSAAA) is disordered. Residue S293 is the site of GPI-anchor amidated serine attachment. A propeptide spans 294-321 (SAIGTSTASSAAASGTAIVDANTCMNSA) (removed in mature form).

It belongs to the polysaccharide monooxygenase AA9 family. It depends on Cu(2+) as a cofactor.

It localises to the cell membrane. The catalysed reaction is [(1-&gt;4)-beta-D-glucosyl]n+m + reduced acceptor + O2 = 4-dehydro-beta-D-glucosyl-[(1-&gt;4)-beta-D-glucosyl]n-1 + [(1-&gt;4)-beta-D-glucosyl]m + acceptor + H2O.. In terms of biological role, lytic polysaccharide monooxygenase (LPMO) that depolymerizes crystalline and amorphous polysaccharides via the oxidation of scissile alpha- or beta-(1-4)-glycosidic bonds, yielding C1 or C4 oxidation products. Catalysis by LPMOs requires the reduction of the active-site copper from Cu(II) to Cu(I) by a reducing agent and H(2)O(2) or O(2) as a cosubstrate. Has broad specificity, cleaving at any position along the beta-glucan backbone of xyloglucan, regardless of substitutions. Shows minor activity on glucomannan. The polypeptide is AA9 family lytic polysaccharide monooxygenase A (Gloeophyllum trabeum (strain ATCC 11539 / FP-39264 / Madison 617) (Brown rot fungus)).